Here is a 255-residue protein sequence, read N- to C-terminus: MNIAKIVREAREQSRLTTLDFATGIFDEFIQLHGDRSFRDDGAVVGGIGWLGDQAVTVVGIQKGKSLQDNLKRNFGQPHPEGYRKALRLMKQAEKFGRPVVTFINTAGAYPGVGAEERGQGEAIARNLMEMSDLKVPIIAIIIGEGGSGGALALAVADRVWMLENSIYAILSPEGFASILWKDGTRAMEAAELMKITSHELLEMDVVDKVISEVGLSSKELIKSVKKELQTELARLSQKPLEELLEERYQRFRKY.

In terms of domain architecture, CoA carboxyltransferase C-terminal spans 1–235 (MNIAKIVREA…KKELQTELAR (235 aa)).

It belongs to the AccA family. In terms of assembly, acetyl-CoA carboxylase is a heterohexamer composed of biotin carboxyl carrier protein (AccB), biotin carboxylase (AccC) and two subunits each of ACCase subunit alpha (AccA) and ACCase subunit beta (AccD).

It is found in the cytoplasm. The catalysed reaction is N(6)-carboxybiotinyl-L-lysyl-[protein] + acetyl-CoA = N(6)-biotinyl-L-lysyl-[protein] + malonyl-CoA. The protein operates within lipid metabolism; malonyl-CoA biosynthesis; malonyl-CoA from acetyl-CoA: step 1/1. Component of the acetyl coenzyme A carboxylase (ACC) complex. First, biotin carboxylase catalyzes the carboxylation of biotin on its carrier protein (BCCP) and then the CO(2) group is transferred by the carboxyltransferase to acetyl-CoA to form malonyl-CoA. The polypeptide is Acetyl-coenzyme A carboxylase carboxyl transferase subunit alpha (Streptococcus pneumoniae serotype 2 (strain D39 / NCTC 7466)).